Reading from the N-terminus, the 207-residue chain is Putative 3-methyladenine DNA glycosylase (207 aa).

Belongs to the DNA glycosylase MPG family.

This is Putative 3-methyladenine DNA glycosylase from Burkholderia lata (strain ATCC 17760 / DSM 23089 / LMG 22485 / NCIMB 9086 / R18194 / 383).